The following is a 618-amino-acid chain: MTQQYPLLDKINSPADLRRLPRTQLPELCAEIRQFLLTSVSQSSGHLASGLGTVELTVALHYVYHTPEDKLVWDVGHQAYPHKILTGRKQRLHSIRQKDGLHPFPWREESEYDVLSVGHSSTSISAALGMAVAAQRQSLRQKVVSIIGDGAMTAGMAFEAMNHAGDIKPDMLVVLNDNDMSISENVGALNHHFARLLSGRFYTSLREGSKKLLSPLPHIRHFASRAEEHMKGMMAPGTIFEELGFNYIGPIDGHDVDTLVDTLSNMRSLGGPQLLHIVTQKGKGYRPAERDPIGYHGVPKFDPKESSLPEKAPGIPSYSEIFGQWLCDTASNDKSLMAITPAMREGSGMVTFSQQYPQQYFDVAIAEQHSVTYAAGLAISGLKPVVAIYSTFLQRGYDQLIHDVALQNLDVLFAIDRAGIVGADGPTHQGAFDLSYLRCIPNMVVMAPSNEQECLDMLTTGYQYKGPAAVRYPRGAGVGLELRKGKVIDIGKAQTLTEGQNIAFLNFGTLLPEVEAAAAKFNATVVDMRFIKPLDTACLDQLMTTHSVLVTVEENVIAGGAGGAVSEYVAQHKASPQVLTIGLPDEFIKHGSQGEVRAELGLDAAGIERQVNDFIKKS.

Thiamine diphosphate is bound by residues His-77 and 118–120 (GHS). Asp-149 provides a ligand contact to Mg(2+). Thiamine diphosphate contacts are provided by residues 150-151 (GA), Asn-178, Tyr-285, and Glu-367. Asn-178 contacts Mg(2+).

It belongs to the transketolase family. DXPS subfamily. Homodimer. Mg(2+) serves as cofactor. The cofactor is thiamine diphosphate.

The enzyme catalyses D-glyceraldehyde 3-phosphate + pyruvate + H(+) = 1-deoxy-D-xylulose 5-phosphate + CO2. It participates in metabolic intermediate biosynthesis; 1-deoxy-D-xylulose 5-phosphate biosynthesis; 1-deoxy-D-xylulose 5-phosphate from D-glyceraldehyde 3-phosphate and pyruvate: step 1/1. Functionally, catalyzes the acyloin condensation reaction between C atoms 2 and 3 of pyruvate and glyceraldehyde 3-phosphate to yield 1-deoxy-D-xylulose-5-phosphate (DXP). This Idiomarina loihiensis (strain ATCC BAA-735 / DSM 15497 / L2-TR) protein is 1-deoxy-D-xylulose-5-phosphate synthase.